The sequence spans 317 residues: MPMQGAQRKLLGSLNSTPTATSNLGLAANHTGAPCLEVSIPDGLFLSLGLVSLVENVLVVAAVAKNRNLHSSMYCFICCLALSDLLVSGSNMLETAVILLLETGALATRTSVVQQLHNTINVLTCSSMLCSLCFLGAIAVDRYISIFYALRYHSIMTLPRAQRAIAAIWVASVLSSTLFITYYDHAAVLLCLVVFFLAMLVLMAVLYVHMLARACQHAHGIIRLHKRQTPAHQGFGLRGAATLTILLGIFFLCWGPFFLHLTLVVFCPQHLTCSCIFKNFKVFLTLIICNTIIDPLIYAFRSQELRRTLKEVLLCSW.

At 1–37 the chain is on the extracellular side; that stretch reads MPMQGAQRKLLGSLNSTPTATSNLGLAANHTGAPCLE. A glycan (N-linked (GlcNAc...) asparagine) is linked at asparagine 29. Residues 38-63 traverse the membrane as a helical segment; it reads VSIPDGLFLSLGLVSLVENVLVVAAV. Residues 64-72 lie on the Cytoplasmic side of the membrane; that stretch reads AKNRNLHSS. The chain crosses the membrane as a helical span at residues 73 to 93; that stretch reads MYCFICCLALSDLLVSGSNML. At 94–118 the chain is on the extracellular side; it reads ETAVILLLETGALATRTSVVQQLHN. The helical transmembrane segment at 119 to 140 threads the bilayer; that stretch reads TINVLTCSSMLCSLCFLGAIAV. The Cytoplasmic portion of the chain corresponds to 141-163; sequence DRYISIFYALRYHSIMTLPRAQR. Residues 164–183 traverse the membrane as a helical segment; that stretch reads AIAAIWVASVLSSTLFITYY. Residues 184–191 are Extracellular-facing; the sequence is DHAAVLLC. The chain crosses the membrane as a helical span at residues 192–211; it reads LVVFFLAMLVLMAVLYVHML. The Cytoplasmic segment spans residues 212–240; sequence ARACQHAHGIIRLHKRQTPAHQGFGLRGA. A helical transmembrane segment spans residues 241-266; the sequence is ATLTILLGIFFLCWGPFFLHLTLVVF. At 267-279 the chain is on the extracellular side; sequence CPQHLTCSCIFKN. The chain crosses the membrane as a helical span at residues 280-300; sequence FKVFLTLIICNTIIDPLIYAF. The Cytoplasmic segment spans residues 301–317; sequence RSQELRRTLKEVLLCSW. Cysteine 315 carries S-palmitoyl cysteine lipidation.

The protein belongs to the G-protein coupled receptor 1 family. Interacts with MGRN1, but does not undergo MGRN1-mediated ubiquitination; this interaction competes with GNAS-binding and thus inhibits agonist-induced cAMP production. Interacts with OPN3; the interaction results in a decrease in MC1R-mediated cAMP signaling and ultimately a decrease in melanin production in melanocytes.

Its subcellular location is the cell membrane. In terms of biological role, receptor for MSH (alpha, beta and gamma) and ACTH. The activity of this receptor is mediated by G proteins which activate adenylate cyclase. Mediates melanogenesis, the production of eumelanin (black/brown) and phaeomelanin (red/yellow), via regulation of cAMP signaling in melanocytes. In Saguinus oedipus (Cotton-top tamarin), this protein is Melanocyte-stimulating hormone receptor (MC1R).